The chain runs to 32 residues: Defensin-3 (32 aa).

3 cysteine pairs are disulfide-bonded: Cys-3-Cys-31, Cys-5-Cys-20, and Cys-10-Cys-30.

It localises to the secreted. Has antibacterial activity against the Gram-negative bacterium E.coli and the Gram-positive bacteria L.monocytogenes and S.aureus. Has antifungal activity against C.albicans. The chain is Defensin-3 from Papio hamadryas (Hamadryas baboon).